The chain runs to 379 residues: Cytochrome b (379 aa).

The next 4 membrane-spanning stretches (helical) occupy residues 33-53 (FGSLLGMCLVIQILTGLFLAM), 77-98 (WLIRYLHANGASMFFICLFIHV), 113-133 (WNIGIILLLTTMATAFVGYVL), and 178-198 (FFAFHFILPFIIAAFALVHLL). 2 residues coordinate heme b: His-83 and His-97. Residues His-182 and His-196 each contribute to the heme b site. His-201 lines the a ubiquinone pocket. 4 consecutive transmembrane segments (helical) span residues 226–246 (IKDLLGIFLLLLILMALALFF), 288–308 (LGGVLALILSILILAAFPLLN), 320–340 (VTQTIYWIFIANLLVLTWIGG), and 347–367 (FTMIGQIASVTYFTIITILIP).

The protein belongs to the cytochrome b family. In terms of assembly, the cytochrome bc1 complex contains 11 subunits: 3 respiratory subunits (MT-CYB, CYC1 and UQCRFS1), 2 core proteins (UQCRC1 and UQCRC2) and 6 low-molecular weight proteins (UQCRH/QCR6, UQCRB/QCR7, UQCRQ/QCR8, UQCR10/QCR9, UQCR11/QCR10 and a cleavage product of UQCRFS1). This cytochrome bc1 complex then forms a dimer. The cofactor is heme b.

The protein localises to the mitochondrion inner membrane. In terms of biological role, component of the ubiquinol-cytochrome c reductase complex (complex III or cytochrome b-c1 complex) that is part of the mitochondrial respiratory chain. The b-c1 complex mediates electron transfer from ubiquinol to cytochrome c. Contributes to the generation of a proton gradient across the mitochondrial membrane that is then used for ATP synthesis. This chain is Cytochrome b (MT-CYB), found in Akodon philipmyersi (Myers' grass mouse).